Reading from the N-terminus, the 3423-residue chain is Genome polyprotein (3423 aa).

Residues methionine 1 to serine 25 are disordered. The Cytoplasmic portion of the chain corresponds to methionine 1–arginine 104. A hydrophobic; homodimerization of capsid protein C region spans residues leucine 37–valine 72. Residues glycine 105–alanine 122 constitute a propeptide, ER anchor for capsid protein C, removed in mature form by serine protease NS3. The helical transmembrane segment at glycine 105–valine 125 threads the bilayer. Residues threonine 126–asparagine 249 lie on the Extracellular side of the membrane. N-linked (GlcNAc...) asparagine; by host glycosylation occurs at asparagine 192. Residues tryptophan 250 to glycine 269 traverse the membrane as a helical segment. The Cytoplasmic segment spans residues serine 270–glutamine 274. Residues lysine 275–serine 290 form a helical membrane-spanning segment. Over isoleucine 291 to serine 745 the chain is Extracellular. A Glycyl lysine isopeptide (Lys-Gly) (interchain with G-Cter in ubiquitin) cross-link involves residue lysine 328. 2 disulfide bridges follow: cysteine 350–cysteine 406 and cysteine 382–cysteine 411. Positions aspartate 388–glycine 401 are fusion peptide. The N-linked (GlcNAc...) asparagine; by host glycan is linked to asparagine 444. 2 disulfides stabilise this stretch: cysteine 480/cysteine 581 and cysteine 598/cysteine 629. Residue lysine 571 forms a Glycyl lysine isopeptide (Lys-Gly) (interchain with G-Cter in ubiquitin) linkage. Residues leucine 746–leucine 767 form a helical membrane-spanning segment. The Cytoplasmic segment spans residues asparagine 768–serine 773. Residues isoleucine 774–alanine 794 form a helical membrane-spanning segment. The Lumenal portion of the chain corresponds to aspartate 795–lysine 1177. Disulfide bonds link cysteine 798–cysteine 809, cysteine 849–cysteine 937, cysteine 973–cysteine 1017, cysteine 1074–cysteine 1123, cysteine 1085–cysteine 1106, and cysteine 1107–cysteine 1110. Asparagine 924 and asparagine 1001 each carry an N-linked (GlcNAc...) asparagine; by host glycan. A helical membrane pass occupies residues isoleucine 1178–serine 1198. Residues aspartate 1199–valine 1220 lie on the Cytoplasmic side of the membrane. The helical transmembrane segment at alanine 1221–phenylalanine 1241 threads the bilayer. Residues arginine 1242 to aspartate 1270 lie on the Lumenal side of the membrane. The chain crosses the membrane as a helical span at residues leucine 1271–proline 1291. Topologically, residues arginine 1292–asparagine 1295 are cytoplasmic. A helical membrane pass occupies residues isoleucine 1296–tryptophan 1316. The Lumenal portion of the chain corresponds to arginine 1317–methionine 1345. The chain crosses the membrane as a helical span at residues alanine 1346–leucine 1366. Residues threonine 1367–serine 1373 lie on the Cytoplasmic side of the membrane. The chain crosses the membrane as a helical span at residues tryptophan 1374–alanine 1394. Residues lysine 1395 to aspartate 1397 are Lumenal-facing. The chain crosses the membrane as a helical span at residues isoleucine 1398 to glycine 1418. The Cytoplasmic portion of the chain corresponds to lysine 1419 to lysine 1472. Positions isoleucine 1425–proline 1464 are interacts with and activates NS3 protease. Residues glycine 1429–aspartate 1451 form a disordered region. The helical intramembrane region spans valine 1473–tryptophan 1493. The Lumenal portion of the chain corresponds to tyrosine 1494–threonine 2170. Residues serine 1503–cysteine 1680 enclose the Peptidase S7 domain. Catalysis depends on charge relay system; for serine protease NS3 activity residues histidine 1553, aspartate 1577, and serine 1637. Positions proline 1683–glutamate 1839 constitute a Helicase ATP-binding domain. Residues lysine 1687–glutamine 1690 are important for RNA-binding. Leucine 1696–threonine 1703 provides a ligand contact to ATP. Positions aspartate 1787–histidine 1790 match the DEAH box motif. The region spanning proline 1834–glutamate 2013 is the Helicase C-terminal domain. Position 1891 is an N6-acetyllysine; by host (lysine 1891). A helical membrane pass occupies residues leucine 2171–leucine 2191. Residues methionine 2192 to lysine 2195 are Lumenal-facing. The segment at residues glycine 2196–leucine 2216 is an intramembrane region (helical). Topologically, residues serine 2217–glutamate 2218 are cytoplasmic. A helical transmembrane segment spans residues isoleucine 2219–isoleucine 2239. Topologically, residues proline 2240–alanine 2254 are lumenal. The helical intramembrane region spans isoleucine 2255–alanine 2269. Residues asparagine 2270–serine 2307 are Lumenal-facing. The segment at residues alanine 2308–threonine 2328 is an intramembrane region (helical). The Lumenal segment spans residues threonine 2329–glycine 2344. The helical transmembrane segment at valine 2345–leucine 2365 threads the bilayer. The Cytoplasmic portion of the chain corresponds to methionine 2366–proline 2375. The helical transmembrane segment at leucine 2376–leucine 2396 threads the bilayer. Residues glutamine 2397–glutamine 2441 lie on the Lumenal side of the membrane. The helical transmembrane segment at valine 2442–glycine 2462 threads the bilayer. Residues glutamate 2463–leucine 3423 lie on the Cytoplasmic side of the membrane. An mRNA cap 0-1 NS5-type MT domain is found at glycine 2521–alanine 2785. Residue lysine 2533–methionine 2539 participates in GTP binding. Residue serine 2576 coordinates S-adenosyl-L-methionine. Serine 2576 carries the post-translational modification Phosphoserine. Residue lysine 2581 is the For 2'-O-MTase activity of the active site. An SUMO-interacting motif (SIM) region spans residues valine 2597–leucine 2600. Positions 2606, 2607, 2624, 2625, 2630, 2631, 2651, 2652, 2666, and 2667 each coordinate S-adenosyl-L-methionine. Aspartate 2666 acts as the For 2'-O-MTase activity in catalysis. Glutamate 2669 to glutamate 2675 lines the GTP pocket. Residue lysine 2702 is the For 2'-O-MTase activity of the active site. Arginine 2733 to serine 2735 contributes to the GTP binding site. The active-site For 2'-O-MTase activity is the glutamate 2738. Residue tyrosine 2740 participates in S-adenosyl-L-methionine binding. Residues lysine 2908–valine 2914 carry the Nuclear localization signal (NLS) motif. Residues glutamate 2959, histidine 2963, cysteine 2968, and cysteine 2971 each contribute to the Zn(2+) site. One can recognise a RdRp catalytic domain in the interval glycine 3049–alanine 3199. 3 residues coordinate Zn(2+): histidine 3234, cysteine 3250, and cysteine 3369.

In the N-terminal section; belongs to the class I-like SAM-binding methyltransferase superfamily. mRNA cap 0-1 NS5-type methyltransferase family. As to quaternary structure, homodimer. Interacts with host SERTAD3; this interaction promotes capsid protein C degradation. Interacts with host CAPRIN1; this interaction is probably linked to the inhibition of stress granules formation by the virus. Interacts with host G3BP1; this interaction is probably linked to the inhibition of stress granules formation by the virus. In terms of assembly, forms heterodimers with envelope protein E in the endoplasmic reticulum and Golgi. Interacts with non-structural protein 2A. Homodimer; in the endoplasmic reticulum and Golgi. Interacts with host TYRO3, AXL and DC-SIGN proteins. Interacts with non-structural protein 2A. Interacts with host HAVCR1; this interaction likely mediates virus attachment to host cell. Interacts with host NCAM1. Interacts with host HSPA5. Interacts with Aedes aegypti SRPN25, APY and venom allergen-1 salivary proteins; the interactions do not affect Zika virus replication in human endothelial cells and keratinocytes. As to quaternary structure, homodimer; Homohexamer when secreted. Interacts with host TBK1. Interacts with host USP8. Interacts with envelope protein E. In terms of assembly, interacts with the structural protein prM/E complex, and the NS2B/NS3 protease complex. Forms a heterodimer with serine protease NS3. May form homooligomers. Interacts with human SPCS1. Interacts with non-structural protein 2A. As to quaternary structure, forms a heterodimer with NS2B. Interacts with NS4B. Interacts with unphosphorylated RNA-directed RNA polymerase NS5; this interaction stimulates RNA-directed RNA polymerase NS5 guanylyltransferase activity. Interacts with non-structural protein 2A. Interacts with host SHFL; this interaction promotes NS3 degradation via a lysosome-dependent pathway. Interacts with host CEP63; this interaction disorganizes the centrosome and inhibits host innate immune response. In terms of assembly, may interact with host ANKLE2; the interaction may cause defects in brain development, such as microcephaly. May interact with host SRPRA and SEC61G. Interacts with serine protease NS3. Interacts with NS1. As to quaternary structure, homodimer; dimerization may negatively regulate the GTase activity, a crucial step in the capping process. Interacts with host STAT2; this interaction inhibits the phosphorylation of the latter, and, when all viral proteins are present (polyprotein), targets STAT2 for degradation. Interacts with host TBK1 and IKBKE; these interactions lead to the inhibition of the host RIG-I signaling pathway. Interacts with host PAF1 complex; the interaction may prevent the recruitment of the host PAF1 complex to interferon-responsive genes, and thus reduces the immune response. Interacts with serine protease NS3. Interacts with host KPNA2. Interacts with host ZSWIM8; this interaction allows STAT2 binding to ZSWIM8 and subsequent proteasomal degradation leading to inhibition of interferon signaling. Specific enzymatic cleavages in vivo yield mature proteins. Cleavages in the lumen of endoplasmic reticulum are performed by host signal peptidase, whereas cleavages in the cytoplasmic side are performed by serine protease NS3. Signal cleavage at the 2K-4B site requires a prior NS3 protease-mediated cleavage at the 4A-2K site. In terms of processing, cleaved in post-Golgi vesicles by a host furin, releasing the mature small envelope protein M, and peptide pr. This cleavage is incomplete as up to 30% of viral particles still carry uncleaved prM. Post-translationally, N-glycosylation plays a role in virulence in mammalian and mosquito hosts, but may have no effect on neurovirulence. Ubiquitination by host TRIM7 promotes virus attachment and fusion of the virus and the host endosome membrane. In terms of processing, N-glycosylated. The excreted form is glycosylated, which is required for efficient secretion of the protein from infected cells. Post-translationally, ubiquitination by host TRIM22 leads to proteasomal degradation. Acetylated by host KAT5. Acetylation modulates NS3 RNA-binding and unwinding activities and plays an important positive role for viral replication. In terms of processing, phosphorylated on serines residues. This phosphorylation may trigger NS5 nuclear localization. Post-translationally, sumoylated, required for regulating IFN induced interferon stimulated genes/ISGs.

The protein resides in the virion. Its subcellular location is the host nucleus. It is found in the host cytoplasm. The protein localises to the host perinuclear region. It localises to the secreted. The protein resides in the virion membrane. Its subcellular location is the host endoplasmic reticulum membrane. It catalyses the reaction a 5'-end (5'-triphosphoguanosine)-ribonucleoside in mRNA + S-adenosyl-L-methionine = a 5'-end (N(7)-methyl 5'-triphosphoguanosine)-ribonucleoside in mRNA + S-adenosyl-L-homocysteine. The catalysed reaction is a 5'-end (N(7)-methyl 5'-triphosphoguanosine)-ribonucleoside in mRNA + S-adenosyl-L-methionine = a 5'-end (N(7)-methyl 5'-triphosphoguanosine)-(2'-O-methyl-ribonucleoside) in mRNA + S-adenosyl-L-homocysteine + H(+). It carries out the reaction RNA(n) + a ribonucleoside 5'-triphosphate = RNA(n+1) + diphosphate. The enzyme catalyses Selective hydrolysis of -Xaa-Xaa-|-Yaa- bonds in which each of the Xaa can be either Arg or Lys and Yaa can be either Ser or Ala.. It catalyses the reaction a ribonucleoside 5'-triphosphate + H2O = a ribonucleoside 5'-diphosphate + phosphate + H(+). The catalysed reaction is ATP + H2O = ADP + phosphate + H(+). Its function is as follows. Plays a role in virus budding by binding to the cell membrane and gathering the viral RNA into a nucleocapsid that forms the core of the mature virus particle. During virus entry, may induce genome penetration into the host cytoplasm after hemifusion induced by the surface proteins. Can migrate to the cell nucleus where it modulates host functions. Inhibits the integrated stress response (ISR) in the infected cell. Functionally, inhibits RNA silencing by interfering with host Dicer. In terms of biological role, prevents premature fusion activity of envelope proteins in trans-Golgi by binding to envelope protein E at pH 6.0. After virion release in extracellular space, gets dissociated from E dimers. Plays a role in host immune defense modulation and protection of envelope protein E during virion synthesis. PrM-E cleavage is inefficient, many virions are only partially matured and immature prM-E proteins could play a role in immune evasion. Contributes to fetal microcephaly in humans. Acts as a chaperone for envelope protein E during intracellular virion assembly by masking and inactivating envelope protein E fusion peptide. prM is the only viral peptide matured by host furin in the trans-Golgi network probably to avoid catastrophic activation of the viral fusion activity in acidic Golgi compartment prior to virion release. Its function is as follows. May play a role in virus budding. Exerts cytotoxic effects by activating a mitochondrial apoptotic pathway through M ectodomain. May display a viroporin activity. Functionally, binds to host cell surface receptors and mediates fusion between viral and cellular membranes. Efficient virus attachment to cell is, at least in part, mediated by host HAVCR1 in a cell-type specific manner. In addition, host NCAM1 can also be used as entry receptor. Interaction with host HSPA5 plays an important role in the early stages of infection as well. Envelope protein is synthesized in the endoplasmic reticulum and forms a heterodimer with protein prM. The heterodimer plays a role in virion budding in the ER, and the newly formed immature particle is covered with 60 spikes composed of heterodimers between precursor prM and envelope protein E. The virion is transported to the Golgi apparatus where the low pH causes the dissociation of PrM-E heterodimers and formation of E homodimers. PrM-E cleavage is inefficient, many virions are only partially matured and immature prM-E proteins could play a role in immune evasion. In terms of biological role, plays a role in the inhibition of host RLR-induced interferon-beta activation by targeting TANK-binding kinase 1/TBK1. In addition, recruits the host deubiquitinase USP8 to cleave 'Lys-11'-linked polyubiquitin chains from caspase-1/CASP1 thus inhibiting its proteasomal degradation. In turn, stabilized CASP1 promotes cleavage of cGAS, which inhibits its ability to recognize mitochondrial DNA release and initiate type I interferon signaling. Component of the viral RNA replication complex that recruits genomic RNA, the structural protein prM/E complex, and the NS2B/NS3 protease complex to the virion assembly site and orchestrates virus morphogenesis. Antagonizes also the host MDA5-mediated induction of alpha/beta interferon antiviral response. May disrupt adherens junction formation and thereby impair proliferation of radial cells in the host cortex. Its function is as follows. Required cofactor for the serine protease function of NS3. Functionally, displays three enzymatic activities: serine protease, NTPase and RNA helicase. NS3 serine protease, in association with NS2B, performs its autocleavage and cleaves the polyprotein at dibasic sites in the cytoplasm: C-prM, NS2A-NS2B, NS2B-NS3, NS3-NS4A, NS4A-2K and NS4B-NS5. NS3 RNA helicase binds RNA and unwinds dsRNA in the 3' to 5' direction. Inhibits the integrated stress response (ISR) in the infected cell by blocking stress granules assembly. Disrupts host centrosome organization in a CEP63-dependent manner to degrade host TBK1 and inhibits innate immune response. In terms of biological role, regulates the ATPase activity of the NS3 helicase activity. NS4A allows NS3 helicase to conserve energy during unwinding. Cooperatively with NS4B suppresses the Akt-mTOR pathway and leads to cellular dysregulation. By inhibiting host ANKLE2 functions, may cause defects in brain development, such as microcephaly. Also antagonizes the host MDA5-mediated induction of alpha/beta interferon antiviral response. Inhibits the integrated stress response (ISR) in the infected cell by blocking stress granules assembly. Functions as a signal peptide for NS4B and is required for the interferon antagonism activity of the latter. Its function is as follows. Induces the formation of ER-derived membrane vesicles where the viral replication takes place. Also plays a role in the inhibition of host RLR-induced interferon-beta production at TANK-binding kinase 1/TBK1 level. Cooperatively with NS4A suppresses the Akt-mTOR pathway and leads to cellular dysregulation. Functionally, replicates the viral (+) and (-) RNA genome, and performs the capping of genomes in the cytoplasm. Methylates viral RNA cap at guanine N-7 and ribose 2'-O positions. Once sufficient NS5 is expressed, binds to the cap-proximal structure and inhibits further translation of the viral genome. Besides its role in RNA genome replication, also prevents the establishment of a cellular antiviral state by blocking the interferon-alpha/beta (IFN-alpha/beta) signaling pathway. Mechanistically, interferes with host kinases TBK1 and IKKE upstream of interferon regulatory factor 3/IRF3 to inhibit the RIG-I pathway. Also antagonizes type I interferon signaling by targeting STAT2 for degradation by the proteasome thereby preventing activation of JAK-STAT signaling pathway. Mechanistically, acts as a scaffold protein to connect host ZSWIM8/CUL3 ligase complex and STAT2, leading to STAT2 degradation. Within the host nucleus, disrupts host SUMO1 and STAT2 co-localization with PML, resulting in PML degradation. May also reduce immune responses by preventing the recruitment of the host PAF1 complex to interferon-responsive genes. In Zika virus (isolate ZIKV/Human/French Polynesia/10087PF/2013) (ZIKV), this protein is Genome polyprotein.